Here is a 243-residue protein sequence, read N- to C-terminus: Segregation and condensation protein A (243 aa).

It belongs to the ScpA family. Component of a cohesin-like complex composed of ScpA, ScpB and the Smc homodimer, in which ScpA and ScpB bind to the head domain of Smc. The presence of the three proteins is required for the association of the complex with DNA.

Its subcellular location is the cytoplasm. In terms of biological role, participates in chromosomal partition during cell division. May act via the formation of a condensin-like complex containing Smc and ScpB that pull DNA away from mid-cell into both cell halves. The protein is Segregation and condensation protein A of Staphylococcus haemolyticus (strain JCSC1435).